The following is a 120-amino-acid chain: Natriuretic peptide (120 aa).

The signal sequence occupies residues 1–25 (MVGLSRLADGGLLLVLALLPLALDG). The propeptide occupies 26–70 (KPAPLEKAPMAPARIIPYLRPVGKESRAALDRMVPPEDGDSRRLE). Cys-81 and Cys-97 are joined by a disulfide. A propeptide spanning residues 110–120 (ILPYLRPIRKE) is cleaved from the precursor.

Belongs to the natriuretic peptide family. In terms of tissue distribution, expressed by the venom gland.

Its subcellular location is the secreted. In terms of biological role, natriuretic peptide that dose-dependently induces the rapid relaxation of rat aortic strips phenylephrine-precontracted. Acts by stimulating cGMP production in a dose-dependent manner (by probably activating NPR1 and/or NPR2). May also show potent hypotensive effects. This chain is Natriuretic peptide, found in Micrurus altirostris (Uruguayan coral snake).